The primary structure comprises 209 residues: Probable GTP-binding protein EngB (209 aa).

The EngB-type G domain maps to 24–198 (EGMEVAFAGR…HGILDQWLGL (175 aa)). GTP contacts are provided by residues 32-39 (GRSNAGKS), 59-63 (GRTQL), 77-80 (DLPG), 144-147 (TKAD), and 177-179 (FSA). Mg(2+)-binding residues include S39 and T61.

The protein belongs to the TRAFAC class TrmE-Era-EngA-EngB-Septin-like GTPase superfamily. EngB GTPase family. The cofactor is Mg(2+).

Functionally, necessary for normal cell division and for the maintenance of normal septation. This chain is Probable GTP-binding protein EngB, found in Thioalkalivibrio sulfidiphilus (strain HL-EbGR7).